Consider the following 87-residue polypeptide: Small ribosomal subunit protein uS17 (87 aa).

The protein belongs to the universal ribosomal protein uS17 family. In terms of assembly, part of the 30S ribosomal subunit.

In terms of biological role, one of the primary rRNA binding proteins, it binds specifically to the 5'-end of 16S ribosomal RNA. The sequence is that of Small ribosomal subunit protein uS17 from Thiobacillus denitrificans (strain ATCC 25259 / T1).